Here is an 800-residue protein sequence, read N- to C-terminus: Blood-group-substance endo-1,4-beta-galactosidase (800 aa).

Positions 1 to 35 (MGGVTMKNNLKKYIKYILSVILVFFVGVNGMEVYA) are cleaved as a signal peptide.

The protein belongs to the glycosyl hydrolase 98 family.

Its subcellular location is the secreted. The catalysed reaction is Endohydrolysis of (1-&gt;4)-beta-D-galactosidic linkages in blood group A and B substances.. In terms of biological role, endo-beta-galactosidase capable of releasing both the blood group A trisaccharide (A-Tri; GalNAcalpha1--&gt;3(Fucalpha1--&gt;2)Gal) and B trisaccharide (B-Tri; Galalpha1--&gt;3(Fucalpha1--&gt;2)Gal) glycotopes from blood group A- and B-containing glycoconjugates, respectively. The sequence is that of Blood-group-substance endo-1,4-beta-galactosidase (eabC) from Clostridium perfringens.